The primary structure comprises 340 residues: Toxin coregulated pilus biosynthesis protein E (340 aa).

Helical transmembrane passes span 108-131 (AISS…GYSV), 146-161 (WPGV…FSLY), and 312-333 (NISL…FSLV).

It belongs to the GSP F family.

It is found in the cell inner membrane. Probably involved in cholera toxin receptor (GM1) interaction in order to bring the cells within close proximity of the ganglioside for efficient toxin delivery. This Vibrio cholerae serotype O1 (strain ATCC 39315 / El Tor Inaba N16961) protein is Toxin coregulated pilus biosynthesis protein E (tcpE).